The sequence spans 3019 residues: Genome polyprotein (3019 aa).

Ser-2 carries the post-translational modification N-acetylserine; by host. The interval 2–23 is interaction with STAT1; it reads STLPKPQRKTKRNTNRRPMDVK. The segment at 2–58 is interaction with EIF2AK2/PKR; that stretch reads STLPKPQRKTKRNTNRRPMDVKFPGGGQIVGGVYLLPRRGPRLGVRATRKTSERSQP. Positions 2–59 are interaction with DDX3X; sequence STLPKPQRKTKRNTNRRPMDVKFPGGGQIVGGVYLLPRRGPRLGVRATRKTSERSQPR. Residues 2-75 are disordered; sequence STLPKPQRKT…PKARQPQGRH (74 aa). The Cytoplasmic segment spans residues 2 to 168; sequence STLPKPQRKT…EDGINYATGN (167 aa). 2 short sequence motifs (nuclear localization signal) span residues 5–13 and 38–43; these read PKPQRKTKR and PRRGPR. Residues 7 to 16 are compositionally biased toward basic residues; sequence PQRKTKRNTN. The span at 32-47 shows a compositional bias: low complexity; the sequence is GGVYLLPRRGPRLGVR. Phosphoserine; by host is present on Ser-53. 2 short sequence motifs (nuclear localization signal) span residues 58 to 64 and 66 to 71; these read PRGRRQP and PKARQP. At Ser-99 the chain carries Phosphoserine; by host. The important for endoplasmic reticulum and mitochondrial localization stretch occupies residues 112 to 152; that stretch reads PRRRSRNLGKVIDTLTCGFADLMGYIPVVGAPLGGVAAALA. At Ser-116 the chain carries Phosphoserine; by host PKA. The interval 122-173 is interaction with APOA2; that stretch reads VIDTLTCGFADLMGYIPVVGAPLGGVAAALAHGVRAIEDGINYATGNLPGCS. Residues 164-167 are important for lipid droplets localization; it reads YATG. The chain crosses the membrane as a helical span at residues 169 to 189; it reads LPGCSFSIFLLALLSCLTTPA. The propeptide at 178–191 is ER anchor for the core protein, removed in mature form by host signal peptidase; that stretch reads LLALLSCLTTPASA. The Lumenal segment spans residues 190-358; sequence SALTYGNSSG…FGGHWGILLA (169 aa). Asn-196, Asn-209, Asn-234, and Asn-250 each carry an N-linked (GlcNAc...) asparagine; by host glycan. Residues 265 to 296 form an important for fusion region; it reads LAGAAVVCSSLYIGDLCGSLFLAGQLFTFQPR. Residue Asn-305 is glycosylated (N-linked (GlcNAc...) asparagine; by host). Residues 359–379 traverse the membrane as a helical segment; sequence VAYFGMAGNWLKVLAVLFLFA. At 380–730 the chain is on the lumenal side; sequence GVEATTTVGH…WEYIVLMFLV (351 aa). Positions 385-411 are HVR1; the sequence is TTVGHGVARTTAGITGLFSPGASQNLQ. Asn-415 carries N-linked (GlcNAc...) asparagine; by host glycosylation. Residues Asn-422 and Asn-429 are each glycosylated (N-linked (GlcNAc...) (high mannose) asparagine; by host). 4 disulfide bridges follow: Cys-428-Cys-553, Cys-451-Cys-458, Cys-487-Cys-495, and Cys-504-Cys-509. Asn-447 carries N-linked (GlcNAc...) asparagine; by host glycosylation. Residues 474 to 479 are HVR2; that stretch reads KVNISG. A glycan (N-linked (GlcNAc...) asparagine; by host) is linked at Asn-476. Positions 481-494 are CD81-binding 1; the sequence is SDDRPYCWHYAPRP. Asn-533 is a glycosylation site (N-linked (GlcNAc...) asparagine; by host). The CD81-binding 2 stretch occupies residues 545–552; sequence PPTGGWFG. Residue Asn-557 is glycosylated (N-linked (GlcNAc...) asparagine; by host). Cysteines 565 and 570 form a disulfide. N-linked (GlcNAc...) asparagine; by host glycosylation occurs at Asn-578. 3 cysteine pairs are disulfide-bonded: Cys-586–Cys-590, Cys-602–Cys-625, and Cys-612–Cys-649. N-linked (GlcNAc...) (high mannose) asparagine; by host glycosylation is found at Asn-628 and Asn-650. Cysteines 657 and 682 form a disulfide. A PKR/eIF2-alpha phosphorylation homology domain (PePHD) region spans residues 665–676; it reads IEMSPLLFSTTQ. The chain crosses the membrane as a helical span at residues 731–751; it reads LADARICTCLWLMLLISNVEA. Residues 752–762 lie on the Lumenal side of the membrane; it reads AVERLVVLNAA. The helical transmembrane segment at 763-783 threads the bilayer; that stretch reads SAAGTAGWWWAVLFLCCVWYV. The Cytoplasmic portion of the chain corresponds to 784-786; the sequence is KGR. The helical transmembrane segment at 787–808 threads the bilayer; the sequence is LVPACTYMALGMWPLLLTILAL. The Lumenal portion of the chain corresponds to 809-818; the sequence is PHRAYAMDNE. A helical transmembrane segment spans residues 819 to 839; the sequence is QAASLGAVGLLAITIFTITPT. Residues 840–843 are Cytoplasmic-facing; the sequence is YKKL. A helical membrane pass occupies residues 844-863; it reads LTCFIWWNQYFLARAEAMVH. Residues 864–886 are Lumenal-facing; that stretch reads EWVPDLRVRGGRDSIILLTCLLH. A helical transmembrane segment spans residues 887–907; that stretch reads PQLGFEVTKILLAILAPLYIL. In terms of domain architecture, Peptidase C18 spans 908–1031; it reads QYSLLKVPYF…DMQRGGWKLL (124 aa). The Cytoplasmic portion of the chain corresponds to 908–1662; sequence QYSLLKVPYF…CMSADLEVIT (755 aa). The tract at residues 909-1211 is protease NS2-3; sequence YSLLKVPYFV…PVENMETTMR (303 aa). Cys-927 carries S-palmitoyl cysteine; by host lipidation. The tract at residues 934–954 is interaction with host SCPS1; it reads AGGRYVQACLLRLGAWTGTFI. Active-site for protease NS2 activity; shared with dimeric partner residues include His-957, Glu-977, and Cys-998. The Peptidase S29 domain occupies 1032–1213; sequence APITAYAQQT…ENMETTMRSP (182 aa). Catalysis depends on charge relay system; for serine protease NS3 activity residues His-1088 and Asp-1112. Zn(2+)-binding residues include Cys-1128 and Cys-1130. Ser-1170 acts as the Charge relay system; for serine protease NS3 activity in catalysis. Residues Cys-1176 and His-1180 each coordinate Zn(2+). One can recognise a Helicase ATP-binding domain in the interval 1222–1374; the sequence is PAVPQTYQVG…PNITETALPT (153 aa). 1235 to 1242 is an ATP binding site; that stretch reads APTGSGKS. Residues Ser-1242 and Glu-1322 each contribute to the Mg(2+) site. The DECH box signature appears at 1321-1324; that stretch reads DECH. The segment at 1491–1503 is RNA-binding; it reads QRRGRTGRGKPGV. Residues 1663 to 1683 form a helical membrane-spanning segment; sequence STWVLVGGVLAALAAYCLSVG. Residues 1684–1695 form an NS3-binding region; the sequence is CVVICGRITLTG. Residues 1684–1810 are Cytoplasmic-facing; the sequence is CVVICGRITL…SLTSPLRTSQ (127 aa). Residues 1811–1829 traverse the membrane as a helical segment; the sequence is TLLLNILGGWIAAQVAPPP. Over 1830 to 1833 the chain is Lumenal; it reads ASTA. A helical membrane pass occupies residues 1834 to 1854; that stretch reads FVVSGLAGAAVGSIRLGRVLV. Asp-1855 is a topological domain (cytoplasmic). Residues 1856 to 1876 traverse the membrane as a helical segment; that stretch reads VLAGYGAGVSGALVAFKIMSG. Residues 1877–1886 are Lumenal-facing; the sequence is DCPTTEDMVN. The chain crosses the membrane as a helical span at residues 1887-1907; it reads LLPALLSPGALVVGVVCAAIL. Residues 1908-1977 lie on the Cytoplasmic side of the membrane; sequence RRHVGPAEGA…WVNEDTATPC (70 aa). The S-palmitoyl cysteine; by host moiety is linked to residue Cys-1977. An intramembrane segment occupies 1978 to 2007; it reads ATSWLRDVWDWVCTVLSDFKVWLQAKLFPR. At 2008–2998 the chain is on the cytoplasmic side; sequence LPGIPFLSCQ…YHSVSQARPR (991 aa). The Zn(2+) site is built by Cys-2016, Cys-2034, Cys-2036, and Cys-2057. Residues 2125–2213 are FKBP8-binding; the sequence is EFFTEVDGVR…ASSSASQLSA (89 aa). Positions 2125–2338 are transcriptional activation; that stretch reads EFFTEVDGVR…PIPPPRRKRL (214 aa). The segment at 2140–2144 is interaction with non-structural protein 4A; it reads PPCKP. The interval 2189-2223 is disordered; that stretch reads ETASRRLKRGSPPSLASSSASQLSAPSLKATCTTS. The tract at residues 2194 to 2446 is interaction with host SKP2; sequence RLKRGSPPSL…ALITPCAAEE (253 aa). Ser-2199 is subject to Phosphoserine; by host; in p56. Positions 2199 to 2216 are enriched in low complexity; sequence SPPSLASSSASQLSAPSL. Phosphoserine; by host; in p58 is present on residues Ser-2202, Ser-2206, Ser-2209, Ser-2212, and Ser-2215. An ISDR region spans residues 2215–2254; sequence SLKATCTTSKDHPDMELIEANLLWRQEMGGNITRVESENK. Residues 2215-2280 form an interaction with EIF2AK2/PKR region; sequence SLKATCTTSK…REISVSAECH (66 aa). The interval 2254-2312 is NS4B-binding; the sequence is KVVVLDSFEPLTAEYDEREISVSAECHRPPRHKFPPALPIWARPDYNPPLLQAWQMPGY. The tract at residues 2305-2383 is V3; it reads QAWQMPGYEP…SITSPDPPAP (79 aa). Positions 2328-2331 match the SH3-binding motif; that stretch reads APIP. A Nuclear localization signal motif is present at residues 2333–2341; sequence PRRKRLVHL. A Glycyl lysine isopeptide (Lys-Gly) (interchain with G-Cter in ubiquitin) cross-link involves residue Lys-2356. Residues 2359–2418 are disordered; it reads VEGSSDPGPSSDSGLSITSPDPPAPTTPDDACSEAESYSSMPPLEGEPGDPDLSSGSWST. Positions 2361–2372 are enriched in low complexity; the sequence is GSSDPGPSSDSG. Phosphoserine; by host occurs at positions 2457 and 2470. The 119-residue stretch at 2642–2760 folds into the RdRp catalytic domain; sequence PMGFSYDTRC…ICESAGVQED (119 aa). Positions 2648, 2746, and 2747 each coordinate Mg(2+). The helical transmembrane segment at 2999-3019 threads the bilayer; the sequence is LLLLGLLLLTVGVGIFLVPAR.

Belongs to the hepacivirus polyprotein family. In terms of assembly, homooligomer. Interacts with E1 (via C-terminus). Interacts with the non-structural protein 5A. Interacts (via N-terminus) with host STAT1 (via SH2 domain); this interaction results in decreased STAT1 phosphorylation and ubiquitin-mediated proteasome-dependent STAT1 degradation, leading to decreased IFN-stimulated gene transcription. Interacts with host STAT3; this interaction constitutively activates STAT3. Interacts with host LTBR receptor. Interacts with host TNFRSF1A receptor and possibly induces apoptosis. Interacts with host HNRPK. Interacts with host YWHAE. Interacts with host UBE3A/E6AP. Interacts with host DDX3X. Interacts with host APOA2. Interacts with host RXRA protein. Interacts with host SP110 isoform 3/Sp110b; this interaction sequesters the transcriptional corepressor SP110 away from the nucleus. Interacts with host CREB3 nuclear transcription protein; this interaction triggers cell transformation. Interacts with host ACY3. Interacts with host C1QR1. Interacts with host RBM24; this interaction, which enhances the interaction of the mature core protein with 5'-UTR, may inhibit viral translation and favor replication. Interacts with host EIF2AK2/PKR; this interaction induces the autophosphorylation of EIF2AK2. Part of the viral assembly initiation complex composed of NS2, E1, E2, NS3, NS4A, NS5A and the mature core protein. As to quaternary structure, forms a heterodimer with envelope glycoprotein E2. Interacts with mature core protein. Interacts with protease NS2. The heterodimer E1/E2 interacts with host CLDN1; this interaction plays a role in viral entry into host cell. Interacts with host SPSB2 (via C-terminus). Part of the viral assembly initiation complex composed of NS2, E1, E2, NS3, NS4A, NS5A and the mature core protein. Interacts with host NEURL3; this interaction prevents E1 binding to glycoprotein E2. Forms a heterodimer with envelope glycoprotein E1. Interacts with host CD81 and SCARB1 receptors; these interactions play a role in viral entry into host cell. Interacts with host EIF2AK2/PKR; this interaction inhibits EIF2AK2 and probably allows the virus to evade the innate immune response. Interacts with host CD209/DC-SIGN and CLEC4M/DC-SIGNR. Interact with host SPCS1; this interaction is essential for viral particle assembly. Interacts with protease NS2. The heterodimer E1/E2 interacts with host CLDN1; this interaction plays a role in viral entry into host cell. Part of the viral assembly initiation complex composed of NS2, E1, E2, NS3, NS4A, NS5A and the mature core protein. Interacts with host SLC3A2/4F2hc; the interaction may facilitate viral entry into host cell. Interacts with human PLSCR1. In terms of assembly, homohexamer. Homoheptamer. Interacts with protease NS2. As to quaternary structure, homodimer. Interacts with host SPCS1; this interaction is essential for viral particle assembly. Interacts with envelope glycoprotein E1. Interacts with envelope glycoprotein E2. Interacts with viroporin p7. Interacts with serine protease/helicase NS3. Part of the replication complex composed of NS2, NS3, NS4A, NS4B, NS5A and the RNA-directed RNA polymerase embedded in an ER-derived membranous web. Part of the viral assembly initiation complex composed of NS2, E1, E2, NS3, NS4A, NS5A and the mature core protein. Interacts with protease NS2. Interacts with non-structural protein 4A; this interaction stabilizes the folding of NS3 serine protease. NS3-NS4A interaction is essential for NS3 activation and allows membrane anchorage of the latter. NS3/NS4A complex also prevents phosphorylation of host IRF3, thus preventing the establishment of dsRNA induced antiviral state. Interacts with host MAVS; this interaction leads to the cleavage and inhibition of host MAVS. Interacts with host TICAM1; this interaction leads to the cleavage and inhibition of host TICAM1. Interacts with host TANK-binding kinase/TBK1; this interaction results in the inhibition of the association between TBK1 and IRF3, which leads to the inhibition of IRF3 activation. Interacts with host RBM24. Part of the replication complex composed of NS2, NS3, NS4A, NS4B, NS5A and the RNA-directed RNA polymerase embedded in an ER-derived membranous web. Part of the viral assembly initiation complex composed of NS2, E1, E2, NS3, NS4A, NS5A and the mature core protein. In terms of assembly, interacts with NS3 serine protease; this interaction stabilizes the folding of NS3 serine protease. NS3-NS4A interaction is essential for NS3 activation and allows membrane anchorage of the latter. Interacts with non-structural protein 5A (via N-terminus). Part of the replication complex composed of NS2, NS3, NS4A, NS4B, NS5A and the RNA-directed RNA polymerase embedded in an ER-derived membranous web. Part of the viral assembly initiation complex composed of NS2, E1, E2, NS3, NS4A, NS5A and the mature core protein. As to quaternary structure, homomultimer. Interacts with non-structural protein NS5A. Interacts with host PLA2G4C; this interaction likely initiates the recruitment of replication complexes to lipid droplets. Interacts with host STING; this interaction disrupts the interaction between STING and TBK1 thereby suppressing the interferon signaling. Part of the replication complex composed of NS2, NS3, NS4A, NS4B, NS5A and the RNA-directed RNA polymerase embedded in an ER-derived membranous web. Monomer. Homodimer; dimerization is required for RNA-binding. Interacts with the mature core protein. Interacts (via N-terminus) with non-structural protein 4A. Interacts with non-structural protein 4B. Interacts (via region D2) with RNA-directed RNA polymerase. Part of the viral assembly initiation complex composed of NS2, E1, E2, NS3, NS4A, NS5A and the mature core protein. Part of the replication complex composed of NS2, NS3, NS4A, NS4B, NS5A and the RNA-directed RNA polymerase embedded in an ER-derived membranous web. Interacts with host GRB2. Interacts with host BIN1. Interacts with host PIK3R1. Interacts with host SRCAP. Interacts with host FKBP8. Interacts (via C-terminus) with host VAPB (via MSP domain). Interacts with host EIF2AK2/PKR; this interaction leads to disruption of EIF2AK2 dimerization by NS5A and probably allows the virus to evade the innate immune response. Interacts (via N-terminus) with host PACSIN2 (via N-terminus); this interaction attenuates protein kinase C alpha-mediated phosphorylation of PACSIN2 by disrupting the interaction between PACSIN2 and PRKCA. Interacts (via N-terminus) with host SRC kinase (via SH2 domain). Interacts with most Src-family kinases. Interacts with host IFI27 and SKP2; promotes the ubiquitin-mediated proteasomal degradation of NS5A. Interacts with host GPS2. Interacts with host TNFRSF21; this interaction allows the modulation by the virus of JNK, p38 MAPK, STAT3, and Akt signaling pathways in a DR6-dependent manner. Interacts (via N-terminus) with host CIDEB (via N-terminus); this interaction seems to regulate the association of HCV particles with APOE. Interacts with host CHKA/Choline Kinase-alpha; CHKA bridges host PI4KA and NS5A and potentiates NS5A-stimulated PI4KA activity, which then facilitates the targeting of the ternary complex to the ER for viral replication. Interacts with host SPSB2 (via C-terminus); this interaction targets NS5A for ubiquitination and degradation. Interacts with host RAB18; this interaction may promote the association of NS5A and other replicase components with lipid droplets. Interacts (via region D2) with host PPIA/CYPA; the interaction stimulates RNA-binding ability of NS5A and is dependent on the peptidyl-prolyl cis-trans isomerase activity of PPIA/CYPA. Interacts with host TRIM14; this interaction induces the degradation of NS5A. In terms of assembly, homooligomer. Interacts with non-structural protein 5A. Interacts with host VAPB. Interacts with host PRK2/PKN2. Interacts with host HNRNPA1 and SEPT6; these interactions facilitate viral replication. Part of the replication complex composed of NS2, NS3, NS4A, NS4B, NS5A and the RNA-directed RNA polymerase. Requires Zn(2+) as cofactor. Mg(2+) is required as a cofactor. In terms of processing, specific enzymatic cleavages in vivo yield mature proteins. The structural proteins, core, E1, E2 and p7 are produced by proteolytic processing by host signal peptidases. The core protein precursor is synthesized as a 23 kDa, which is retained in the ER membrane through the hydrophobic signal peptide. Cleavage by the signal peptidase releases the 21 kDa mature core protein. The cleavage of the core protein precursor occurs between aminoacids 176 and 188 but the exact cleavage site is not known. Some degraded forms of the core protein appear as well during the course of infection. The other proteins (p7, NS2, NS3, NS4A, NS4B, NS5A and NS5B) are cleaved by the viral proteases. Autoprocessing between NS2 and NS3 is mediated by the NS2 cysteine protease catalytic domain and regulated by the NS3 N-terminal domain. Post-translationally, phosphorylated by host PKC and PKA. Ubiquitinated; mediated by UBE3A and leading to core protein subsequent proteasomal degradation. In terms of processing, highly N-glycosylated. Post-translationally, palmitoylation is required for NS2/3 autoprocessing and E2 recruitment to membranes. Palmitoylated. This modification may play a role in its polymerization or in protein-protein interactions. In terms of processing, phosphorylated on serines in a basal form termed p56. p58 is a hyperphosphorylated form of p56. p56 and p58 coexist in the cell in roughly equivalent amounts. Hyperphosphorylation is dependent on the presence of NS4A. Host CSNK1A1/CKI-alpha or RPS6KB1 kinases may be responsible for NS5A phosphorylation. Post-translationally, tyrosine phosphorylation is essential for the interaction with host SRC. The N-terminus is phosphorylated by host PRK2/PKN2.

It is found in the host endoplasmic reticulum membrane. The protein resides in the host mitochondrion membrane. The protein localises to the virion. Its subcellular location is the host cytoplasm. It localises to the host nucleus. It is found in the host lipid droplet. The protein resides in the virion membrane. The protein localises to the host mitochondrion. Its subcellular location is the host cell membrane. It localises to the host perinuclear region. The catalysed reaction is Hydrolysis of four peptide bonds in the viral precursor polyprotein, commonly with Asp or Glu in the P6 position, Cys or Thr in P1 and Ser or Ala in P1'.. It carries out the reaction a ribonucleoside 5'-triphosphate + H2O = a ribonucleoside 5'-diphosphate + phosphate + H(+). It catalyses the reaction ATP + H2O = ADP + phosphate + H(+). The enzyme catalyses RNA(n) + a ribonucleoside 5'-triphosphate = RNA(n+1) + diphosphate. Inhibited by the antiviral drug hexamethylene amiloride. Inhibition by amantadine appears to be genotype-dependent. Also inhibited by long-alkyl-chain iminosugar derivatives. With respect to regulation, activity is up-regulated by PRK2/PKN2-mediated phosphorylation. Its function is as follows. Packages viral RNA to form a viral nucleocapsid, and promotes virion budding. Participates in the viral particle production as a result of its interaction with the non-structural protein 5A. Binds RNA and may function as a RNA chaperone to induce the RNA structural rearrangements taking place during virus replication. Modulates viral translation initiation by interacting with viral IRES and 40S ribosomal subunit. Affects various cell signaling pathways, host immunity and lipid metabolism. Prevents the establishment of cellular antiviral state by blocking the interferon-alpha/beta (IFN-alpha/beta) and IFN-gamma signaling pathways and by blocking the formation of phosphorylated STAT1 and promoting ubiquitin-mediated proteasome-dependent degradation of STAT1. Activates STAT3 leading to cellular transformation. Regulates the activity of cellular genes, including c-myc and c-fos. May repress the promoter of p53, and sequester CREB3 and SP110 isoform 3/Sp110b in the cytoplasm. Represses cell cycle negative regulating factor CDKN1A, thereby interrupting an important check point of normal cell cycle regulation. Targets transcription factors involved in the regulation of inflammatory responses and in the immune response: suppresses TNF-induced NF-kappa-B activation, and activates AP-1. Binds to dendritic cells (DCs) via C1QR1, resulting in down-regulation of T-lymphocytes proliferation. Alters lipid metabolism by interacting with hepatocellular proteins involved in lipid accumulation and storage. Induces up-regulation of FAS promoter activity, and thereby contributes to the increased triglyceride accumulation in hepatocytes (steatosis). In terms of biological role, forms a heterodimer with envelope glycoprotein E2, which mediates virus attachment to the host cell, virion internalization through clathrin-dependent endocytosis and fusion with host membrane. Fusion with the host cell is most likely mediated by both E1 and E2, through conformational rearrangements of the heterodimer required for fusion rather than a classical class II fusion mechanism. E1/E2 heterodimer binds host apolipoproteins such as APOB and ApoE thereby forming a lipo-viro-particle (LVP). APOE associated to the LVP allows the initial virus attachment to cell surface receptors such as the heparan sulfate proteoglycans (HSPGs), syndecan-1 (SDC1), syndecan-1 (SDC2), the low-density lipoprotein receptor (LDLR) and scavenger receptor class B type I (SCARB1). The cholesterol transfer activity of SCARB1 allows E2 exposure and binding of E2 to SCARB1 and the tetraspanin CD81. E1/E2 heterodimer binding on CD81 activates the epithelial growth factor receptor (EGFR) signaling pathway. Diffusion of the complex E1-E2-EGFR-SCARB1-CD81 to the cell lateral membrane allows further interaction with Claudin 1 (CLDN1) and occludin (OCLN) to finally trigger HCV entry. Forms a heterodimer with envelope glycoprotein E1, which mediates virus attachment to the host cell, virion internalization through clathrin-dependent endocytosis and fusion with host membrane. Fusion with the host cell is most likely mediated by both E1 and E2, through conformational rearrangements of the heterodimer required for fusion rather than a classical class II fusion mechanism. The interaction between envelope glycoprotein E2 and host apolipoprotein E/APOE allows the proper assembly, maturation and infectivity of the viral particles. This interaction is probably promoted via the up-regulation of cellular autophagy by the virus. E1/E2 heterodimer binds host apolipoproteins such as APOB and APOE thereby forming a lipo-viro-particle (LVP). APOE associated to the LVP allows the initial virus attachment to cell surface receptors such as the heparan sulfate proteoglycans (HSPGs), syndecan-1 (SDC1), syndecan-1 (SDC2), the low-density lipoprotein receptor (LDLR) and scavenger receptor class B type I (SCARB1). The cholesterol transfer activity of SCARB1 allows E2 exposure and binding of E2 to SCARB1 and the tetraspanin CD81. E1/E2 heterodimer binding on CD81 activates the epithelial growth factor receptor (EGFR) signaling pathway. Diffusion of the complex E1-E2-EGFR-SCARB1-CD81 to the cell lateral membrane allows further interaction with Claudin 1 (CLDN1) and occludin (OCLN) to finally trigger HCV entry. Inhibits host EIF2AK2/PKR activation, preventing the establishment of an antiviral state. Viral ligand for CD209/DC-SIGN and CLEC4M/DC-SIGNR, which are respectively found on dendritic cells (DCs), and on liver sinusoidal endothelial cells and macrophage-like cells of lymph node sinuses. These interactions allow the capture of circulating HCV particles by these cells and subsequent facilitated transmission to permissive cells such as hepatocytes and lymphocyte subpopulations. The interaction between E2 and host amino acid transporter complex formed by SLC3A2 and SLC7A5/LAT1 may facilitate viral entry into host cell. Functionally, ion channel protein that acts as a viroporin and plays an essential role in the assembly, envelopment and secretion of viral particles. Regulates the host cell secretory pathway, which induces the intracellular retention of viral glycoproteins and favors assembly of viral particles. Creates a pore in acidic organelles and releases Ca(2+) and H(+) in the cytoplasm of infected cells, leading to a productive viral infection. High levels of cytoplasmic Ca(2+) may trigger membrane trafficking and transport of viral ER-associated proteins to viroplasms, sites of viral genome replication. This ionic imbalance induces the assembly of the inflammasome complex, which triggers the maturation of pro-IL-1beta into IL-1beta through the action of caspase-1. Targets also host mitochondria and induces mitochondrial depolarization. In addition of its role as a viroporin, acts as a lipid raft adhesion factor. Its function is as follows. Cysteine protease required for the proteolytic auto-cleavage between the non-structural proteins NS2 and NS3. The N-terminus of NS3 is required for the function of NS2 protease (active region NS2-3). Promotes the initiation of viral particle assembly by mediating the interaction between structural and non-structural proteins. In terms of biological role, displays three enzymatic activities: serine protease with a chymotrypsin-like fold, NTPase and RNA helicase. NS3 serine protease, in association with NS4A, is responsible for the cleavages of NS3-NS4A, NS4A-NS4B, NS4B-NS5A and NS5A-NS5B. The NS3/NS4A complex prevents phosphorylation of host IRF3, thus preventing the establishment of dsRNA induced antiviral state. The NS3/NS4A complex induces host amino acid transporter component SLC3A2, thus contributing to HCV propagation. NS3 RNA helicase binds to RNA and unwinds both dsDNA and dsRNA in the 3' to 5' direction, and likely resolves RNA complicated stable secondary structures in the template strand. Binds a single ATP and catalyzes the unzipping of a single base pair of dsRNA. Inhibits host antiviral proteins TBK1 and IRF3 thereby preventing the establishment of an antiviral state. Cleaves host MAVS/CARDIF thereby preventing the establishment of an antiviral state. Cleaves host TICAM1/TRIF, thereby disrupting TLR3 signaling and preventing the establishment of an antiviral state. Induces a specific membrane alteration that serves as a scaffold for the virus replication complex. This membrane alteration gives rise to the so-called ER-derived membranous web that contains the replication complex. NS4B self-interaction contributes to its function in membranous web formation. Promotes host TRIF protein degradation in a CASP8-dependent manner thereby inhibiting host TLR3-mediated interferon signaling. Disrupts the interaction between STING and TBK1 contributing to the inhibition of interferon signaling. Functionally, phosphorylated protein that is indispensable for viral replication and assembly. Both hypo- and hyperphosphorylated states are required for the viral life cycle. The hyperphosphorylated form of NS5A is an inhibitor of viral replication. Involved in RNA-binding and especially in binding to the viral genome. Zinc is essential for RNA-binding. Participates in the viral particle production as a result of its interaction with the mature viral core protein. Its interaction with host VAPB may target the viral replication complex to vesicles. Down-regulates viral IRES translation initiation. Mediates interferon resistance, presumably by interacting with and inhibiting host EIF2AK2/PKR. Prevents BIN1-induced apoptosis. Acts as a transcriptional activator of some host genes important for viral replication when localized in the nucleus. Via the interaction with host PACSIN2, modulates lipid droplet formation in order to promote virion assembly. Modulates TNFRSF21/DR6 signaling pathway for viral propagation. Its function is as follows. RNA-dependent RNA polymerase that performs primer-template recognition and RNA synthesis during viral replication. Initiates RNA transcription/replication at a flavin adenine dinucleotide (FAD), resulting in a 5'- FAD cap on viral RNAs. In this way, recognition of viral 5' RNA by host pattern recognition receptors can be bypassed, thereby evading activation of antiviral pathways. This is Genome polyprotein from Hepatitis C virus genotype 6a (isolate 6a33) (HCV).